The chain runs to 236 residues: Reticulon-3 (236 aa).

The segment covering 1 to 24 (MAEPSAATQSPSISSSSSGAEPSA) has biased composition (low complexity). Residues 1 to 31 (MAEPSAATQSPSISSSSSGAEPSAPGGGGSP) are disordered. The residue at position 2 (Ala2) is an N-acetylalanine. Residues 2-67 (AEPSAATQSP…KKTGFVFGTT (66 aa)) lie on the Cytoplasmic side of the membrane. Ser30 carries the phosphoserine modification. Residues 48-236 (VHDLIFWRDV…LPGIAKKKAE (189 aa)) enclose the Reticulon domain. Positions 68–91 (LIMLLSLAAFSVISVVSYLILALL) form an intramembrane region, helical. Residues 92-151 (SVTISFRIYKSVIQAVQKSEEGHPFKAYLDVDITLSSEAFHNYMNAAMVHINRALKLIIR) are Cytoplasmic-facing. Positions 152 to 172 (LFLVEDLVDSLKLAVFMWLMT) form an intramembrane region, helical. At 173-176 (YVGA) the chain is on the cytoplasmic side. An intramembrane region (helical) is located at residues 177 to 197 (VFNGITLLILAELLIFSVPIV). Residues 191–236 (IFSVPIVYEKYKTQIDHYVGIARDQTKSIVEKIQAKLPGIAKKKAE) are interaction with FADD. Residues 198-236 (YEKYKTQIDHYVGIARDQTKSIVEKIQAKLPGIAKKKAE) lie on the Cytoplasmic side of the membrane. The interaction with BACE1 stretch occupies residues 204–206 (QID).

As to quaternary structure, homodimer. Interacts with RTN4. Interacts with BACE1, BACE2, BCL2 and FADD. Interacts with ATL1 and ATL2. Interacts with TMEM33. Interacts with ZFYVE27 and with KIF5A in a ZFYVE27-dependent manner. Interacts with RIGI. Interacts with TRIM25.

Its subcellular location is the endoplasmic reticulum membrane. The protein localises to the golgi apparatus membrane. Functionally, may be involved in membrane trafficking in the early secretory pathway. Inhibits BACE1 activity and amyloid precursor protein processing. May induce caspase-8 cascade and apoptosis. May favor BCL2 translocation to the mitochondria upon endoplasmic reticulum stress. Induces the formation of endoplasmic reticulum tubules. Acts also as an inflammation-resolving regulator by interacting with both TRIM25 and RIGI, subsequently impairing RIGI 'Lys-63'-linked polyubiquitination leading to IRF3 and NF-kappa-B inhibition. This chain is Reticulon-3 (RTN3), found in Pongo abelii (Sumatran orangutan).